We begin with the raw amino-acid sequence, 66 residues long: MLKKFRDLTLEDIKAKRLSLKKEYMDLRFKAVVGHVENPLKKRELRRDIARLNTIVHEYEIGIRKV.

It belongs to the universal ribosomal protein uL29 family.

This is Large ribosomal subunit protein uL29 from Borrelia turicatae (strain 91E135).